The primary structure comprises 474 residues: Probable glycine dehydrogenase (decarboxylating) subunit 2 (474 aa).

Lys262 carries the post-translational modification N6-(pyridoxal phosphate)lysine.

Belongs to the GcvP family. C-terminal subunit subfamily. The glycine cleavage system is composed of four proteins: P, T, L and H. In this organism, the P 'protein' is a heterodimer of two subunits. Pyridoxal 5'-phosphate is required as a cofactor.

It carries out the reaction N(6)-[(R)-lipoyl]-L-lysyl-[glycine-cleavage complex H protein] + glycine + H(+) = N(6)-[(R)-S(8)-aminomethyldihydrolipoyl]-L-lysyl-[glycine-cleavage complex H protein] + CO2. Functionally, the glycine cleavage system catalyzes the degradation of glycine. The P protein binds the alpha-amino group of glycine through its pyridoxal phosphate cofactor; CO(2) is released and the remaining methylamine moiety is then transferred to the lipoamide cofactor of the H protein. The sequence is that of Probable glycine dehydrogenase (decarboxylating) subunit 2 from Thermotoga maritima (strain ATCC 43589 / DSM 3109 / JCM 10099 / NBRC 100826 / MSB8).